A 138-amino-acid chain; its full sequence is Putative pre-16S rRNA nuclease (138 aa).

The protein belongs to the YqgF nuclease family.

It localises to the cytoplasm. In terms of biological role, could be a nuclease involved in processing of the 5'-end of pre-16S rRNA. The protein is Putative pre-16S rRNA nuclease of Escherichia fergusonii (strain ATCC 35469 / DSM 13698 / CCUG 18766 / IAM 14443 / JCM 21226 / LMG 7866 / NBRC 102419 / NCTC 12128 / CDC 0568-73).